We begin with the raw amino-acid sequence, 479 residues long: MNIETLFPLDPNVKVRTRFAPSPTGYLHVGGARTALYSWLYAKHFNGEFVLRIEDTDLERSTPEATAAILEGMEWLNLAWEHGPYYQTKRFDRYNQVIDQMIEQGLAYRCYCSKERLENLRHEQEANKEKPRYDRHCLAHHDQPTDAPHVVRFKNPQEGSVVFDDAVRGRIEISNSELDDLIIRRTDGSPTYNFCVVVDDWDMGITHVVRGEDHINNTPRQINILKALGAPIPTYAHVSMINGDDGQKLSKRHGAVSVMQYRDDGYLPEALINYLVRLGWGHGDQEIFSREEMIELFDIHSVSKSASAFNTDKLQWLNQHYMRSLPAEHVAKYLAWHMNDQAIDTSNGPALEEIIPVLSERAKTLKELAAASRYFYQEFDGYDEKAAAKNFKAEAVAPLAKLLEKLTALTDWSVEAIHDAMNATAADLEIGMGKVGMPFRLAVTGSGQSPSMDITAKLVGRERTLARIQKAIEFIQAQA.

Positions P21–G31 match the 'HIGH' region motif. The short motif at K248–R252 is the 'KMSKS' region element. K251 lines the ATP pocket.

The protein belongs to the class-I aminoacyl-tRNA synthetase family. Glutamate--tRNA ligase type 1 subfamily. As to quaternary structure, monomer.

The protein resides in the cytoplasm. The catalysed reaction is tRNA(Glu) + L-glutamate + ATP = L-glutamyl-tRNA(Glu) + AMP + diphosphate. Functionally, catalyzes the attachment of glutamate to tRNA(Glu) in a two-step reaction: glutamate is first activated by ATP to form Glu-AMP and then transferred to the acceptor end of tRNA(Glu). In Actinobacillus pleuropneumoniae serotype 7 (strain AP76), this protein is Glutamate--tRNA ligase.